Consider the following 360-residue polypeptide: Probable protein phosphatase 2C 54 (360 aa).

Residues 1-39 (MCVEESEGAERLDFGEPAAAAADAGKSKSKSPDELPSPR) form a disordered region. The PPM-type phosphatase domain occupies 65 to 325 (RSGDWSDIGG…DNLTAVLVSF (261 aa)). Mn(2+) is bound by residues Asp-109, Gly-110, Asp-273, and Asp-316.

Belongs to the PP2C family. Requires Mg(2+) as cofactor. Mn(2+) is required as a cofactor.

It carries out the reaction O-phospho-L-seryl-[protein] + H2O = L-seryl-[protein] + phosphate. The catalysed reaction is O-phospho-L-threonyl-[protein] + H2O = L-threonyl-[protein] + phosphate. The protein is Probable protein phosphatase 2C 54 of Oryza sativa subsp. japonica (Rice).